The chain runs to 131 residues: MVNDIIADSLTRLRNASMRRLEFTQLYYAKIVVSILEIFKEKGFIKDFNIKDKDKKQSVYVQLAYDEKGYSKISEVKRLSKPGRRVYKQKNELKRFKNGYGVIVVSTSKGVITNEEAYRQNVGGEVLCSIW.

This sequence belongs to the universal ribosomal protein uS8 family. In terms of assembly, part of the 30S ribosomal subunit. Contacts proteins S5 and S12.

Its function is as follows. One of the primary rRNA binding proteins, it binds directly to 16S rRNA central domain where it helps coordinate assembly of the platform of the 30S subunit. This chain is Small ribosomal subunit protein uS8, found in Helicobacter acinonychis (strain Sheeba).